Here is a 191-residue protein sequence, read N- to C-terminus: Putative resolvase L103 (191 aa).

A DNA-binding region (H-T-H motif) is located at residues 11–30 (LEVLKVHYQTLYRMEEKGLI). Positions 59–191 (KGICYCRVSS…KKSGKLKAKK (133 aa)) constitute a Resolvase/invertase-type recombinase catalytic domain. Positions 65-91 (RVSSKKQIKDLNRQVEYMEKNYPEYEI) form a coiled coil. The O-(5'-phospho-DNA)-serine intermediate role is filled by Ser-67.

The protein belongs to the site-specific recombinase resolvase family.

Its function is as follows. Resolvase catalyzes the resolution (a site-specific recombination) of the cointegrated replicon to yield the final transposition products. The polypeptide is Putative resolvase L103 (Acanthamoeba polyphaga (Amoeba)).